Here is a 589-residue protein sequence, read N- to C-terminus: Carbonic anhydrase (589 aa).

Alpha-carbonic anhydrase domains are found at residues H59–K316 and D321–N585. Residue T258–T259 coordinates substrate. Residues M390–A589 form a catalytic region. The Zn(2+) site is built by H420, H422, and H440.

It belongs to the alpha-carbonic anhydrase family. Requires Zn(2+) as cofactor.

The catalysed reaction is hydrogencarbonate + H(+) = CO2 + H2O. In terms of biological role, reversible hydration of carbon dioxide. This chain is Carbonic anhydrase (DCA), found in Dunaliella salina (Green alga).